We begin with the raw amino-acid sequence, 797 residues long: RAS guanyl-releasing protein 1 (797 aa).

Positions 1-12 (MGTLGKAREAPR) are enriched in basic and acidic residues. The disordered stretch occupies residues 1-23 (MGTLGKAREAPRKPSHGCRAASK). An N-terminal Ras-GEF domain is found at 53 to 176 (LGHLAKGASL…RLIDTTQINA (124 aa)). The segment at 57 to 110 (AKGASLDDLIDSCIQSFDADGNLCRSNQLLQVMLTMHRIVISSAELLQKVITLY) is ras exchanger motif region; required for transforming activity. Residue Thr-184 is modified to Phosphothreonine; by PKC. Residues 205–436 (EPEELSEHLT…YELSYAREPR (232 aa)) enclose the Ras-GEF domain. EF-hand domains follow at residues 470–505 (HVQR…FPFS) and 506–532 (FCVM…ASSI). Positions 483, 485, 487, 489, and 494 each coordinate Ca(2+). Residues 541 to 591 (PHNFQETTYLKPTFCDNCAGFLWGVIKQGYRCKDCGMNCHKQCKDLVVFEC) form a Phorbol-ester/DAG-type zinc finger. Residues 673–694 (TQTESQPWIGSEGPSGPFVLSS) form a disordered region. The segment at 686–694 (PSGPFVLSS) is suppress the PT region-mediated translocation to plasma membrane. The tract at residues 718 to 797 (LVRKRAFVKW…LAQMEQGDCS (80 aa)) is PT region; mediates the BCR-dependent translocation to plasma membrane. The stretch at 746–786 (PTYQELEQEINTLKADNDALKIQLKYAQKKIESLQLEKSNH) forms a coiled coil.

Belongs to the RASGRP family. Homodimer. Forms a signaling complex with DGKZ and HRAS. Interacts with F-actin. Interacts with SKAP1. In terms of tissue distribution, expressed in brain with higher expression in cerebellum, cerebral cortex and amygdala. Expressed in the hematopoietic system. Expressed in T-cells (at protein level). Expressed in NK cells (at protein level).

Its subcellular location is the cytoplasm. The protein localises to the cytosol. It is found in the cell membrane. It localises to the golgi apparatus membrane. The protein resides in the endoplasmic reticulum membrane. Its activity is regulated as follows. Autoinhibited. Activated by diacylglycerol and calcium binding, which induces a conformational change releasing the autoinhibitory state. Regulated by DGKA. Regulated by DGKZ. Regulated by PLC gamma and F-actin polymerization. Functionally, functions as a calcium- and diacylglycerol (DAG)-regulated nucleotide exchange factor specifically activating Ras through the exchange of bound GDP for GTP. Activates the Erk/MAP kinase cascade. Regulates T-cell/B-cell development, homeostasis and differentiation by coupling T-lymphocyte/B-lymphocyte antigen receptors to Ras. Regulates NK cell cytotoxicity and ITAM-dependent cytokine production by activation of Ras-mediated ERK and JNK pathways. Functions in mast cell degranulation and cytokine secretion, regulating FcERI-evoked allergic responses. May also function in differentiation of other cell types. The protein is RAS guanyl-releasing protein 1 (RASGRP1) of Homo sapiens (Human).